The sequence spans 534 residues: Flavonoid-6-hydroxylase (534 aa).

A helical transmembrane segment spans residues 3 to 23 (FISFVYTLIAFSSLLYFYLIW). Residue cysteine 467 participates in heme binding.

It belongs to the cytochrome P450 family. Requires heme as cofactor. Expressed in leaves.

It localises to the membrane. It catalyses the reaction genkwanin + reduced [NADPH--hemoprotein reductase] + O2 = scutellarein 7-methyl ether + oxidized [NADPH--hemoprotein reductase] + H2O. The enzyme catalyses (2S)-sakuranetin + reduced [NADPH--hemoprotein reductase] + O2 = (2S)-7-methylcarthamidin + oxidized [NADPH--hemoprotein reductase] + H2O + H(+). It carries out the reaction apigenin 4',7-dimethyl ether + reduced [NADPH--hemoprotein reductase] + O2 = ladanein + oxidized [NADPH--hemoprotein reductase] + H2O + H(+). The catalysed reaction is (2S)-naringenin 4',7-dimethyl ether + reduced [NADPH--hemoprotein reductase] + O2 = (2S)-carthamidin-4',7-dimethyl ether + oxidized [NADPH--hemoprotein reductase] + H2O + H(+). Its pathway is flavonoid metabolism. Its function is as follows. Hydroxylase involved in the biosynthesis of polymethoxylated flavonoids natural products such as nevadensin and salvigenin, aroma compounds which contribute to the flavor of sweet basil, and exhibit pharmacological activities such as anti-allergic, anti-oxidant, antibacterial, anti-proliferative, and anti-inflammatory effects. Catalyzes the 6-hydroxylation of 7-O-methylated precursors such as the conversion of genkwanin (GENK) to scutellarein-7-methyl ether (SCU7Me). Can also use, with a lower efficiency, apigenin-7,4'-dimethyl ether (AdM), naringenin-7-methyl ether (SAK) and naringenin-7,4'-dimethyl ether (NdM) as substrates. This Ocimum basilicum (Sweet basil) protein is Flavonoid-6-hydroxylase.